Reading from the N-terminus, the 302-residue chain is Ornithine carbamoyltransferase (302 aa).

Carbamoyl phosphate contacts are provided by residues 52–55 (STRT), Q79, R103, and 130–133 (HPCQ). L-ornithine contacts are provided by residues N161, D221, and 225-226 (SM). Residues 261–262 (CL) and R289 each bind carbamoyl phosphate.

The protein belongs to the aspartate/ornithine carbamoyltransferase superfamily. OTCase family.

Its subcellular location is the cytoplasm. The catalysed reaction is carbamoyl phosphate + L-ornithine = L-citrulline + phosphate + H(+). It functions in the pathway amino-acid biosynthesis; L-arginine biosynthesis; L-arginine from L-ornithine and carbamoyl phosphate: step 1/3. Functionally, reversibly catalyzes the transfer of the carbamoyl group from carbamoyl phosphate (CP) to the N(epsilon) atom of ornithine (ORN) to produce L-citrulline. The sequence is that of Ornithine carbamoyltransferase from Methanosarcina mazei (strain ATCC BAA-159 / DSM 3647 / Goe1 / Go1 / JCM 11833 / OCM 88) (Methanosarcina frisia).